Consider the following 491-residue polypeptide: Ketol-acid reductoisomerase (NADP(+)) (491 aa).

Residues 15–208 (AQLGKCRFMG…GGHRAGVLES (194 aa)) enclose the KARI N-terminal Rossmann domain. Residues 45–48 (CGAQ), Arg68, Arg76, Ser78, and 108–110 (DKQ) each bind NADP(+). His132 is a catalytic residue. An NADP(+)-binding site is contributed by Gly158. 2 consecutive KARI C-terminal knotted domains span residues 209 to 344 (SFVA…TAPQ) and 345 to 484 (YEGK…MTDM). Mg(2+) is bound by residues Asp217, Glu221, Glu389, and Glu393. Ser414 contacts substrate.

It belongs to the ketol-acid reductoisomerase family. The cofactor is Mg(2+).

The enzyme catalyses (2R)-2,3-dihydroxy-3-methylbutanoate + NADP(+) = (2S)-2-acetolactate + NADPH + H(+). It carries out the reaction (2R,3R)-2,3-dihydroxy-3-methylpentanoate + NADP(+) = (S)-2-ethyl-2-hydroxy-3-oxobutanoate + NADPH + H(+). Its pathway is amino-acid biosynthesis; L-isoleucine biosynthesis; L-isoleucine from 2-oxobutanoate: step 2/4. The protein operates within amino-acid biosynthesis; L-valine biosynthesis; L-valine from pyruvate: step 2/4. Functionally, involved in the biosynthesis of branched-chain amino acids (BCAA). Catalyzes an alkyl-migration followed by a ketol-acid reduction of (S)-2-acetolactate (S2AL) to yield (R)-2,3-dihydroxy-isovalerate. In the isomerase reaction, S2AL is rearranged via a Mg-dependent methyl migration to produce 3-hydroxy-3-methyl-2-ketobutyrate (HMKB). In the reductase reaction, this 2-ketoacid undergoes a metal-dependent reduction by NADPH to yield (R)-2,3-dihydroxy-isovalerate. This is Ketol-acid reductoisomerase (NADP(+)) from Escherichia fergusonii (strain ATCC 35469 / DSM 13698 / CCUG 18766 / IAM 14443 / JCM 21226 / LMG 7866 / NBRC 102419 / NCTC 12128 / CDC 0568-73).